Reading from the N-terminus, the 266-residue chain is Protein-ADP-ribose hydrolase (266 aa).

The Macro domain occupies threonine 74–alanine 265. Aspartate 93, isoleucine 94, and asparagine 107 together coordinate ADP-D-ribose. Residues cysteine 113, histidine 118, and cysteine 120 each contribute to the Zn(2+) site. Cysteine 120, isoleucine 121, aspartate 122, serine 212, threonine 213, glycine 214, and phenylalanine 216 together coordinate ADP-D-ribose.

It belongs to the MacroD-type family. Zn-Macro subfamily. It depends on Zn(2+) as a cofactor.

It catalyses the reaction 4-O-(ADP-D-ribosyl)-L-aspartyl-[protein] + H2O = L-aspartyl-[protein] + ADP-D-ribose + H(+). Its function is as follows. ADP-ribosylhydrolase that specifically reverses the SirTM-mediated mono-ADP-ribosylation at an asparatate residue of GcvH-L, by releasing ADP-ribose from the target protein. May play a role in the regulation of the response to host-induced oxidative stress. The chain is Protein-ADP-ribose hydrolase from Staphylococcus aureus (strain MRSA252).